Here is a 577-residue protein sequence, read N- to C-terminus: PTS system lactose-specific EIICB component (577 aa).

In terms of domain architecture, PTS EIIC type-3 spans 4–405 (VFDKLKPVFE…VLDVAIYFPF (402 aa)). 9 helical membrane passes run 27-47 (GFIA…VAYV), 63-83 (LMVA…GTTA), 100-120 (INPV…SILP), 133-153 (QGLI…YVCI), 176-196 (LIPM…FKAA), 219-239 (YLGL…GVQG), 280-300 (VMNF…LFAA), 326-346 (FGMP…TPIV), and 386-406 (LAFV…FPFI). In terms of domain architecture, PTS EIIB type-3 spans 476–577 (EVDVLVLCAG…MALDFVESNL (102 aa)). The active-site Phosphocysteine intermediate; for EIIB activity is C483. Phosphocysteine; by EIIA is present on C483.

It localises to the cell membrane. It catalyses the reaction lactose(out) + N(pros)-phospho-L-histidyl-[protein] = lactose 6-phosphate(in) + L-histidyl-[protein]. In terms of biological role, the phosphoenolpyruvate-dependent sugar phosphotransferase system (sugar PTS), a major carbohydrate active transport system, catalyzes the phosphorylation of incoming sugar substrates concomitantly with their translocation across the cell membrane. The enzyme II LacEF PTS system is involved in lactose transport. The sequence is that of PTS system lactose-specific EIICB component from Lacticaseibacillus casei (Lactobacillus casei).